The sequence spans 431 residues: E3 ubiquitin-protein ligase marc-3 (431 aa).

Residues 5-74 (NASLGPAVCR…EICKFAFKIK (70 aa)) form an RING-CH-type zinc finger. Positions 13, 16, 38, 40, 48, 51, 64, and 67 each coordinate Zn(2+). 2 helical membrane-spanning segments follow: residues 98-118 (PFIDFAFVLLILPFAFFGVFM) and 157-177 (LFLFVALLLFSAFITLVVSAL). 2 disordered regions span residues 267-289 (TSPDSNNTHHHDESRNEIPFGRR) and 327-349 (SRATSTRRESGISPESSSRRDMR). The span at 273–282 (NTHHHDESRN) shows a compositional bias: basic and acidic residues.

The protein localises to the cell membrane. It localises to the endosome membrane. The catalysed reaction is S-ubiquitinyl-[E2 ubiquitin-conjugating enzyme]-L-cysteine + [acceptor protein]-L-lysine = [E2 ubiquitin-conjugating enzyme]-L-cysteine + N(6)-ubiquitinyl-[acceptor protein]-L-lysine.. It functions in the pathway protein modification; protein ubiquitination. In terms of biological role, E3 ubiquitin-protein ligase which positively regulates the fast polyspermy block during fertilization, preventing entry of more than one sperm into the oocyte. After fertilization, required in the zygote for the selective degradation of a subset of maternal membrane proteins including cav-1, chs-1 and rme-2, probably by mediating their K63-linked polyubiquitination. This is E3 ubiquitin-protein ligase marc-3 from Caenorhabditis elegans.